Here is a 423-residue protein sequence, read N- to C-terminus: UDP-N-acetylglucosamine 1-carboxyvinyltransferase 1 (423 aa).

23 to 24 (KN) contributes to the phosphoenolpyruvate binding site. R96 provides a ligand contact to UDP-N-acetyl-alpha-D-glucosamine. Residue C120 is the Proton donor of the active site. C120 carries the 2-(S-cysteinyl)pyruvic acid O-phosphothioketal modification. UDP-N-acetyl-alpha-D-glucosamine is bound by residues 125–129 (RPIDL), D309, and V331.

Belongs to the EPSP synthase family. MurA subfamily.

It is found in the cytoplasm. The enzyme catalyses phosphoenolpyruvate + UDP-N-acetyl-alpha-D-glucosamine = UDP-N-acetyl-3-O-(1-carboxyvinyl)-alpha-D-glucosamine + phosphate. Its pathway is cell wall biogenesis; peptidoglycan biosynthesis. Its function is as follows. Cell wall formation. Adds enolpyruvyl to UDP-N-acetylglucosamine. This is UDP-N-acetylglucosamine 1-carboxyvinyltransferase 1 from Streptococcus thermophilus (strain CNRZ 1066).